The sequence spans 32 residues: CSDGLKGLNALGTLPRKGLNALGTLPWVDLYN.

The polypeptide is Putative leucine-rich repeat protein PS14 (Pinus strobus (Eastern white pine)).